The sequence spans 187 residues: Large ribosomal subunit protein bL21 (187 aa).

The interval 157–187 (KVAKKAVKKTVKKATKTGAKKKAAKKTSKKA) is disordered.

It belongs to the bacterial ribosomal protein bL21 family. As to quaternary structure, part of the 50S ribosomal subunit. Contacts protein L20.

Functionally, this protein binds to 23S rRNA in the presence of protein L20. The polypeptide is Large ribosomal subunit protein bL21 (Bdellovibrio bacteriovorus (strain ATCC 15356 / DSM 50701 / NCIMB 9529 / HD100)).